A 283-amino-acid chain; its full sequence is Elongation factor Ts (283 aa).

Residues 79–82 are involved in Mg(2+) ion dislocation from EF-Tu; sequence TDFV.

Belongs to the EF-Ts family.

It is found in the cytoplasm. Its function is as follows. Associates with the EF-Tu.GDP complex and induces the exchange of GDP to GTP. It remains bound to the aminoacyl-tRNA.EF-Tu.GTP complex up to the GTP hydrolysis stage on the ribosome. This Shewanella baltica (strain OS155 / ATCC BAA-1091) protein is Elongation factor Ts.